A 110-amino-acid chain; its full sequence is Minor capsid protein VP2 (110 aa).

Belongs to the vesivirus VP2 protein family. As to quaternary structure, homooligomer. The portal-like structure consists in 12 copies of VP2. Interacts with capsid protein VP1.

It is found in the virion. The protein localises to the host cytoplasm. Functionally, minor structural protein that forms a portal-like structure at a unique three-fold axis of symmetry, following binding to the host receptor. The channel formed by VP2 may allow the delivery of the viral genome through the host endosomal membrane. The chain is Minor capsid protein VP2 from Otariidae (fur seals &amp; sea lions).